A 147-amino-acid chain; its full sequence is Ubiquitin-conjugating enzyme E2 D2 (147 aa).

A UBC core domain is found at 1–147 (MALKRIHKEL…AREWTQKYAM (147 aa)). Residue Cys-85 is the Glycyl thioester intermediate of the active site.

The protein belongs to the ubiquitin-conjugating enzyme family. Interacts with SCF (SKP1-CUL1-F-box protein) E3 ubiquitin ligase complex. Interacts with CNOT4 (via RING domain). Interacts with E3 ubiquitin-protein ligases CBLC, PJA1 and PJA2. Interacts with PDZRN3. Interacts with PPP1R11. Interacts with E3 ubiquitin-protein ligase PHF7; the interaction inhibits cleavage of PHF7 and promotes association of the complex with the nucleosome core particle.

The catalysed reaction is S-ubiquitinyl-[E1 ubiquitin-activating enzyme]-L-cysteine + [E2 ubiquitin-conjugating enzyme]-L-cysteine = [E1 ubiquitin-activating enzyme]-L-cysteine + S-ubiquitinyl-[E2 ubiquitin-conjugating enzyme]-L-cysteine.. It carries out the reaction S-ubiquitinyl-[E1 ubiquitin-activating enzyme]-L-cysteine + [acceptor protein]-L-lysine = [E1 ubiquitin-activating enzyme]-L-cysteine + N(6)-monoubiquitinyl-[acceptor protein]-L-lysine.. It participates in protein modification; protein ubiquitination. Functionally, accepts ubiquitin from the E1 complex and catalyzes its covalent attachment to other proteins. In vitro catalyzes 'Lys-48'-linked polyubiquitination. Mediates the selective degradation of short-lived and abnormal proteins. Functions in the E6/E6-AP-induced ubiquitination of p53/TP53. Mediates ubiquitination of PEX5 and SQSTM1 and autoubiquitination of STUB1 and TRAF6. Involved in the signal-induced conjugation and subsequent degradation of NFKBIA, FBXW2-mediated GCM1 ubiquitination and degradation, MDM2-dependent degradation of p53/TP53 and the activation of MAVS in the mitochondria by RIGI in response to viral infection. Essential for viral activation of IRF3. The sequence is that of Ubiquitin-conjugating enzyme E2 D2 (UBE2D2) from Bos taurus (Bovine).